The chain runs to 650 residues: Chaperone protein HtpG (650 aa).

An a; substrate-binding region spans residues 1 to 356 (MSTRVETLEF…THDLSLNISR (356 aa)). The tract at residues 222–245 (AKDRDSNDDGTAESGAGAENAGDR) is disordered. The segment at 357 to 572 (EILQQDRRIQ…TFDMTPALEK (216 aa)) is b. The segment at 573–650 (MYRAMGHEMP…LLAERLAEAL (78 aa)) is c.

Belongs to the heat shock protein 90 family. In terms of assembly, homodimer.

Its subcellular location is the cytoplasm. In terms of biological role, molecular chaperone. Has ATPase activity. The sequence is that of Chaperone protein HtpG from Frankia casuarinae (strain DSM 45818 / CECT 9043 / HFP020203 / CcI3).